The following is a 278-amino-acid chain: MAMLSFERKYRVRGGTLIGGDLFDFWVGPFYVGFFGVAGFFFALLGVLLIVWGATIGPNAELQTYNIWQISIAPPDLSYGLGMAPMTEGGLWQIITICAIGAFVSWALREVEICRKLGIGFHIPFAFAFAIGAYLVLVVVRPILMGAWGHGFPYGILSHLDWVSNVGYQFLHFHYNPAHMLAITFFFTNCLALSMHGSLILSVTNPQKGEEVKTSEHENTFFRDIVGYSIGALAIHRLGLFLALSAVFWSAVCIVISGPFWTRGWPEWWNWWLELPLW.

3 helical membrane-spanning segments follow: residues 33 to 56 (GFFG…GATI), 90 to 118 (GLWQ…RKLG), and 121 to 146 (FHIP…ILMG). (7R,8Z)-bacteriochlorophyll b contacts are provided by histidine 159 and histidine 179. A helical membrane pass occupies residues 176-205 (NPAHMLAITFFFTNCLALSMHGSLILSVTN). Position 196 (histidine 196) interacts with Fe cation. Phenylalanine 222 is a binding site for a ubiquinone. Residues 231-257 (GALAIHRLGLFLALSAVFWSAVCIVIS) traverse the membrane as a helical segment. Histidine 236 is a Fe cation binding site.

The protein belongs to the reaction center PufL/M/PsbA/D family. In terms of assembly, reaction center is composed of four bacteriochlorophylls, two bacteriopheophytins, two ubiquinones, one iron, and two highly hydrophobic polypeptide chains (designated L and M).

It localises to the cellular chromatophore membrane. Its function is as follows. The reaction center is a membrane-bound complex that mediates the initial photochemical event in the electron transfer process of photosynthesis. The polypeptide is Reaction center protein L chain (pufL) (Allochromatium vinosum (strain ATCC 17899 / DSM 180 / NBRC 103801 / NCIMB 10441 / D) (Chromatium vinosum)).